The chain runs to 299 residues: MVPTQVTIFSIIMYVLESLVIIVQSCTTVAVLFREWMHFQRLSPVEIILISLGISHFCLQWTSMLYNFGTYSRPVLLFWKVSVVWEFMNVLTFWLTSLLAVLYCVKVSSFSHPVFLWLRLKILKLVLWLLLGALIASCLSIIPSVVKYHIQMELLTLDHLPKNSSLILRLQMFEWYFSNPFKMIGFGVPFLVFLISIILLTVSLVQHWGQMKHYSSSSSSLRAQCTVLKSLATFFIFFTSYFLTIVVSFIGTVFDKKSWFWVCEAVIYGLVCIHFTSLMMSNPTLKKALRLQFWSPESS.

Topologically, residues 1 to 5 are extracellular; that stretch reads MVPTQ. A helical transmembrane segment spans residues 6-26; it reads VTIFSIIMYVLESLVIIVQSC. The Cytoplasmic portion of the chain corresponds to 27-44; the sequence is TTVAVLFREWMHFQRLSP. A helical membrane pass occupies residues 45–65; sequence VEIILISLGISHFCLQWTSML. Residues 66–82 lie on the Extracellular side of the membrane; the sequence is YNFGTYSRPVLLFWKVS. The chain crosses the membrane as a helical span at residues 83 to 103; the sequence is VVWEFMNVLTFWLTSLLAVLY. Residues 104 to 125 lie on the Cytoplasmic side of the membrane; sequence CVKVSSFSHPVFLWLRLKILKL. A helical membrane pass occupies residues 126-146; sequence VLWLLLGALIASCLSIIPSVV. At 147–183 the chain is on the extracellular side; that stretch reads KYHIQMELLTLDHLPKNSSLILRLQMFEWYFSNPFKM. Asn163 carries an N-linked (GlcNAc...) asparagine glycan. The chain crosses the membrane as a helical span at residues 184–204; it reads IGFGVPFLVFLISIILLTVSL. Residues 205 to 233 are Cytoplasmic-facing; the sequence is VQHWGQMKHYSSSSSSLRAQCTVLKSLAT. Residues 234-254 form a helical membrane-spanning segment; the sequence is FFIFFTSYFLTIVVSFIGTVF. Residues 255 to 258 lie on the Extracellular side of the membrane; sequence DKKS. A helical membrane pass occupies residues 259–279; the sequence is WFWVCEAVIYGLVCIHFTSLM. Residues 280–299 are Cytoplasmic-facing; sequence MSNPTLKKALRLQFWSPESS.

This sequence belongs to the G-protein coupled receptor T2R family. Interacts with RTP3 and RTP4. Expressed in subsets of taste receptor cells of the tongue and palate epithelium and exclusively in gustducin-positive cells. Expressed in the antrum and fundus (part of the stomach), duodenum and in gastric endocrine cells.

The protein resides in the cell membrane. Functionally, gustducin-coupled receptor implicated in the perception of bitter compounds in the oral cavity and the gastrointestinal tract. Signals through PLCB2 and the calcium-regulated cation channel TRPM5. The chain is Taste receptor type 2 member 16 (Tas2r16) from Rattus norvegicus (Rat).